The chain runs to 94 residues: Co-chaperonin GroES (94 aa).

This sequence belongs to the GroES chaperonin family. As to quaternary structure, heptamer of 7 subunits arranged in a ring. Interacts with the chaperonin GroEL.

Its subcellular location is the cytoplasm. Together with the chaperonin GroEL, plays an essential role in assisting protein folding. The GroEL-GroES system forms a nano-cage that allows encapsulation of the non-native substrate proteins and provides a physical environment optimized to promote and accelerate protein folding. GroES binds to the apical surface of the GroEL ring, thereby capping the opening of the GroEL channel. The sequence is that of Co-chaperonin GroES from Tetragenococcus halophilus (Pediococcus halophilus).